We begin with the raw amino-acid sequence, 446 residues long: sn-2 acyl-lipid omega-3 desaturase (ferredoxin), chloroplastic (446 aa).

A chloroplast-targeting transit peptide spans 1–65; sequence MANLVLSECG…DGFTRNWALN (65 aa). Transmembrane regions (helical) follow at residues 118–138 and 141–161; these read LSYV…AAYL and WIVW…LFVL. A Histidine box-1 motif is present at residues 163–167; sequence HDCGH. Positions 199–203 match the Histidine box-2 motif; it reads HRTHH. Transmembrane regions (helical) follow at residues 231–250, 279–299, and 302–322; these read RFFR…YLWA, TACW…IGPI, and LKLY…VTYL. The Histidine box-3 motif lies at 366-370; that stretch reads HVIHH.

This sequence belongs to the fatty acid desaturase type 1 family. In terms of tissue distribution, most abundant in leaves and seedlings.

The protein localises to the plastid. It localises to the chloroplast inner membrane. The enzyme catalyses a (7Z,10Z)-hexadecadienoyl-containing glycerolipid + 2 reduced [2Fe-2S]-[ferredoxin] + O2 + 2 H(+) = a (7Z,10Z,13Z)-hexadecatrienoyl-containing glycerolipid + 2 oxidized [2Fe-2S]-[ferredoxin] + 2 H2O. It carries out the reaction a (9Z,12Z)-octadecadienoyl-containing glycerolipid + 2 reduced [2Fe-2S]-[ferredoxin] + O2 + 2 H(+) = (9Z,12Z,15Z)-octadecatrienoyl-containing glycerolipid + 2 oxidized [2Fe-2S]-[ferredoxin] + 2 H2O. Its pathway is lipid metabolism; polyunsaturated fatty acid biosynthesis. Chloroplast omega-3 fatty acid desaturase introduces the third double bond in the biosynthesis of 16:3 and 18:3 fatty acids, important constituents of plant membranes. It is thought to use ferredoxin as an electron donor and to act on fatty acids esterified to galactolipids, sulfolipids and phosphatidylglycerol. This is sn-2 acyl-lipid omega-3 desaturase (ferredoxin), chloroplastic from Arabidopsis thaliana (Mouse-ear cress).